The following is a 215-amino-acid chain: Adenylate kinase (215 aa).

Position 10–15 (Gly-10–Thr-15) interacts with ATP. Residues Ser-30–Val-59 form an NMP region. AMP contacts are provided by residues Thr-31, Arg-36, Gly-57 to Val-59, Gly-85 to Arg-88, and Gln-92. The tract at residues Gly-122 to Asp-159 is LID. ATP contacts are provided by residues Arg-123 and Val-132–Tyr-133. AMP-binding residues include Arg-156 and Arg-167. Gly-201 lines the ATP pocket.

The protein belongs to the adenylate kinase family. Monomer.

It is found in the cytoplasm. The catalysed reaction is AMP + ATP = 2 ADP. The protein operates within purine metabolism; AMP biosynthesis via salvage pathway; AMP from ADP: step 1/1. Functionally, catalyzes the reversible transfer of the terminal phosphate group between ATP and AMP. Plays an important role in cellular energy homeostasis and in adenine nucleotide metabolism. This is Adenylate kinase from Pseudomonas fluorescens (strain SBW25).